The chain runs to 379 residues: Guanine nucleotide-binding protein G(s) subunit alpha (379 aa).

Positions 1–29 (MGCFGSAGAKGDAEENKKRKEANKNINKQ) are disordered. Residue glycine 2 is the site of N-palmitoyl glycine attachment. A lipid anchor (S-palmitoyl cysteine) is attached at cysteine 3. The G-alpha domain occupies 39-379 (ATHRLLLLGA…RMHLRQYELL (341 aa)). The interval 42-55 (RLLLLGAGESGKST) is G1 motif. GTP contacts are provided by residues 47–54 (GAGESGKS), 183–189 (LRCRVLT), 208–212 (DVGGQ), 277–280 (NKQD), and alanine 351. The Mg(2+) site is built by serine 54 and threonine 189. The tract at residues 181-189 (DILRCRVLT) is G2 motif. Residues 204–213 (FHMFDVGGQR) form a G3 motif region. The G4 motif stretch occupies residues 273–280 (ILFLNKQD). A G5 motif region spans residues 349-354 (TCAVDT).

The protein belongs to the G-alpha family. G(s) subfamily. As to quaternary structure, g proteins are composed of 3 units; alpha, beta and gamma. The alpha chain contains the guanine nucleotide binding site.

Functionally, guanine nucleotide-binding proteins (G proteins) are involved as modulators or transducers in various transmembrane signaling systems. The G(s) protein is involved in hormonal regulation of adenylate cyclase: it activates the cyclase in response to beta-adrenergic stimuli. This chain is Guanine nucleotide-binding protein G(s) subunit alpha, found in Homarus americanus (American lobster).